The primary structure comprises 171 residues: Co-chaperone protein HscB (171 aa).

Residues 2 to 74 (DYFTLFGLPA…LTRAEYLLSL (73 aa)) form the J domain.

It belongs to the HscB family. In terms of assembly, interacts with HscA and stimulates its ATPase activity. Interacts with IscU.

In terms of biological role, co-chaperone involved in the maturation of iron-sulfur cluster-containing proteins. Seems to help targeting proteins to be folded toward HscA. The polypeptide is Co-chaperone protein HscB (Klebsiella pneumoniae (strain 342)).